Consider the following 163-residue polypeptide: uncharacterized protein (163 aa).

Over residues 1-10 (MTHPLPHDSH) the composition is skewed to basic and acidic residues. Disordered regions lie at residues 1–21 (MTHP…VNKS) and 71–112 (SKQP…EQRR). Polar residues predominate over residues 90–105 (PASSLQDHSRLTSLSR).

This is an uncharacterized protein from Homo sapiens (Human).